The following is a 362-amino-acid chain: E3 ubiquitin-protein ligase rififylin (362 aa).

The disordered stretch occupies residues 17–37 (ETPPPQGARTQAYSNPGYSSF). A compositionally biased stretch (polar residues) spans 24–37 (ARTQAYSNPGYSSF). The FYVE-type zinc finger occupies 41 to 93 (TGSEPSCKACGVHFASTTRKQTCLDCKKNFCMTCSSQEGNGPRLCLLCLRFRA). One can recognise an SAP 1 domain in the interval 101-120 (LMKMKVKDLRDYLSLHDIST). Positions 162–183 (LTQPQSSTVPPTSPGLPSSPAQ) are disordered. Residues Ser-225, Ser-228, Ser-231, and Ser-239 each carry the phosphoserine modification. The region spanning 249–263 (IEGLTVRQLKEILAR) is the SAP 2 domain. The RING-type zinc-finger motif lies at 315–350 (CKICMDSPIDCVLLECGHMVTCTKCGKRMNECPICR).

In terms of assembly, interacts with CASP8 and CASP10. Interacts with RIPK1 (via protein kinase domain); involved in RIPK1 ubiquitination. Interacts with PRR5L. Interacts (via RING-type zinc finger) with p53/TP53; involved in p53/TP53 ubiquitination. Interacts (via RING-type zinc finger) with MDM2; the interaction stabilizes MDM2. In terms of processing, autoubiquitinated. Post-translationally, palmitoylated. Undergoes caspase-mediated cleavage upon death-receptor activation, by TNFSF10 for instance. May be mediated by the caspases CASP8 and CASP10 in a negative feedback loop. As to expression, ubiquitous. Detected in cerebrum, cerebellum, midbrain, brain stem, hippocampus, striatum, liver, heart, lung, kidney, muscle, spleen and testis.

The protein resides in the cytoplasm. It localises to the cytosol. The protein localises to the cell membrane. It is found in the recycling endosome membrane. The enzyme catalyses S-ubiquitinyl-[E2 ubiquitin-conjugating enzyme]-L-cysteine + [acceptor protein]-L-lysine = [E2 ubiquitin-conjugating enzyme]-L-cysteine + N(6)-ubiquitinyl-[acceptor protein]-L-lysine.. It functions in the pathway protein modification; protein ubiquitination. Its function is as follows. E3 ubiquitin-protein ligase that regulates several biological processes through the ubiquitin-mediated proteasomal degradation of various target proteins. Mediates 'Lys-48'-linked polyubiquitination of PRR5L and its subsequent proteasomal degradation thereby indirectly regulating cell migration through the mTORC2 complex. Also ubiquitinates the caspases CASP8 and CASP10, promoting their proteasomal degradation, to negatively regulate apoptosis downstream of death domain receptors. Also negatively regulates the tumor necrosis factor-mediated signaling pathway through targeting of RIPK1 to ubiquitin-mediated proteasomal degradation. Negatively regulates p53/TP53 through its direct ubiquitination and targeting to proteasomal degradation. Indirectly, may also negatively regulate p53/TP53 through ubiquitination and degradation of SFN. May also play a role in endocytic recycling. This chain is E3 ubiquitin-protein ligase rififylin, found in Rattus norvegicus (Rat).